The chain runs to 396 residues: S-adenosylmethionine synthase 2 (396 aa).

Position 13 (Glu-13) interacts with Mg(2+). ATP is bound at residue His-19. Residue Glu-47 coordinates K(+). Residues Glu-60 and Gln-103 each coordinate L-methionine. ATP-binding positions include 171–173 (DGK), 239–242 (SGRF), Asp-250, 256–257 (RK), Ala-273, Lys-277, and Lys-281. Residue Asp-250 coordinates L-methionine. Position 281 (Lys-281) interacts with L-methionine.

The protein belongs to the AdoMet synthase family. In terms of assembly, homotetramer. Requires Mn(2+) as cofactor. The cofactor is Mg(2+). It depends on Co(2+) as a cofactor. K(+) is required as a cofactor.

The protein localises to the cytoplasm. The enzyme catalyses L-methionine + ATP + H2O = S-adenosyl-L-methionine + phosphate + diphosphate. It participates in amino-acid biosynthesis; S-adenosyl-L-methionine biosynthesis; S-adenosyl-L-methionine from L-methionine: step 1/1. Functionally, catalyzes the formation of S-adenosylmethionine from methionine and ATP. The reaction comprises two steps that are both catalyzed by the same enzyme: formation of S-adenosylmethionine (AdoMet) and triphosphate, and subsequent hydrolysis of the triphosphate. This Dianthus caryophyllus (Carnation) protein is S-adenosylmethionine synthase 2 (SAM2).